Here is a 193-residue protein sequence, read N- to C-terminus: ATP-dependent Clp protease proteolytic subunit 1 (193 aa).

Ser98 serves as the catalytic Nucleophile. His123 is a catalytic residue.

It belongs to the peptidase S14 family. Fourteen ClpP subunits assemble into 2 heptameric rings which stack back to back to give a disk-like structure with a central cavity, resembling the structure of eukaryotic proteasomes.

It is found in the cytoplasm. The catalysed reaction is Hydrolysis of proteins to small peptides in the presence of ATP and magnesium. alpha-casein is the usual test substrate. In the absence of ATP, only oligopeptides shorter than five residues are hydrolyzed (such as succinyl-Leu-Tyr-|-NHMec, and Leu-Tyr-Leu-|-Tyr-Trp, in which cleavage of the -Tyr-|-Leu- and -Tyr-|-Trp bonds also occurs).. Functionally, cleaves peptides in various proteins in a process that requires ATP hydrolysis. Has a chymotrypsin-like activity. Plays a major role in the degradation of misfolded proteins. This is ATP-dependent Clp protease proteolytic subunit 1 from Bacillus cereus (strain ATCC 10987 / NRS 248).